Consider the following 166-residue polypeptide: Nucleotide-binding protein Acid_3194 (166 aa).

Belongs to the YajQ family.

Nucleotide-binding protein. The chain is Nucleotide-binding protein Acid_3194 from Solibacter usitatus (strain Ellin6076).